Reading from the N-terminus, the 218-residue chain is Putative pre-16S rRNA nuclease (218 aa).

This sequence belongs to the YqgF nuclease family.

It is found in the cytoplasm. Its function is as follows. Could be a nuclease involved in processing of the 5'-end of pre-16S rRNA. This chain is Putative pre-16S rRNA nuclease, found in Thermotoga maritima (strain ATCC 43589 / DSM 3109 / JCM 10099 / NBRC 100826 / MSB8).